We begin with the raw amino-acid sequence, 271 residues long: NADPH-dependent 7-cyano-7-deazaguanine reductase (271 aa).

Substrate is bound at residue 81-83; that stretch reads IES. Position 83 to 84 (83 to 84) interacts with NADPH; it reads SK. Catalysis depends on Cys177, which acts as the Thioimide intermediate. Asp184 (proton donor) is an active-site residue. Position 216-217 (216-217) interacts with substrate; sequence HE. 245–246 lines the NADPH pocket; that stretch reads RG.

It belongs to the GTP cyclohydrolase I family. QueF type 2 subfamily. As to quaternary structure, homodimer.

The protein resides in the cytoplasm. The enzyme catalyses 7-aminomethyl-7-carbaguanine + 2 NADP(+) = 7-cyano-7-deazaguanine + 2 NADPH + 3 H(+). It functions in the pathway tRNA modification; tRNA-queuosine biosynthesis. Its function is as follows. Catalyzes the NADPH-dependent reduction of 7-cyano-7-deazaguanine (preQ0) to 7-aminomethyl-7-deazaguanine (preQ1). The sequence is that of NADPH-dependent 7-cyano-7-deazaguanine reductase from Xanthomonas campestris pv. campestris (strain 8004).